The primary structure comprises 206 residues: Small ribosomal subunit protein uS4 (206 aa).

In terms of domain architecture, S4 RNA-binding spans 98–155; it reads TRLDNVVYRLGWALSRDQARQLVSHGKIAVNGKRVNIPSYNLKPGDVVELLDKDLIPV.

Belongs to the universal ribosomal protein uS4 family. In terms of assembly, part of the 30S ribosomal subunit. Contacts protein S5. The interaction surface between S4 and S5 is involved in control of translational fidelity.

Its function is as follows. One of the primary rRNA binding proteins, it binds directly to 16S rRNA where it nucleates assembly of the body of the 30S subunit. Functionally, with S5 and S12 plays an important role in translational accuracy. In Dictyoglomus thermophilum (strain ATCC 35947 / DSM 3960 / H-6-12), this protein is Small ribosomal subunit protein uS4.